A 386-amino-acid chain; its full sequence is Patatin-07 (386 aa).

Residues 1–23 (MATTKSFLILFFMILATTSSTCA) form the signal peptide. Residues 32 to 229 (LSIDGGGIKG…TVADPALLSV (198 aa)) form the PNPLA domain. The GXGXXG signature appears at 36 to 41 (GGGIKG). Positions 75-79 (GTSTG) match the GXSXG motif. Residue Ser-77 is the Nucleophile of the active site. 2 N-linked (GlcNAc...) asparagine glycosylation sites follow: Asn-115 and Asn-202. The Proton acceptor role is filled by Asp-215. Positions 215-217 (DGA) match the DGA/G motif.

Belongs to the patatin family. As to expression, tuber.

The protein resides in the vacuole. Probable lipolytic acyl hydrolase (LAH), an activity which is thought to be involved in the response of tubers to pathogens. The protein is Patatin-07 of Solanum tuberosum (Potato).